A 115-amino-acid chain; its full sequence is DNA-binding protein APE_1087b (115 aa).

It belongs to the PDCD5 family.

The polypeptide is DNA-binding protein APE_1087b (Aeropyrum pernix (strain ATCC 700893 / DSM 11879 / JCM 9820 / NBRC 100138 / K1)).